The primary structure comprises 190 residues: Large ribosomal subunit protein uL5 (190 aa).

It belongs to the universal ribosomal protein uL5 family. As to quaternary structure, part of the 50S ribosomal subunit; part of the 5S rRNA/L5/L18/L25 subcomplex. Contacts the 5S rRNA and the P site tRNA. Forms a bridge to the 30S subunit in the 70S ribosome.

In terms of biological role, this is one of the proteins that bind and probably mediate the attachment of the 5S RNA into the large ribosomal subunit, where it forms part of the central protuberance. In the 70S ribosome it contacts protein S13 of the 30S subunit (bridge B1b), connecting the 2 subunits; this bridge is implicated in subunit movement. Contacts the P site tRNA; the 5S rRNA and some of its associated proteins might help stabilize positioning of ribosome-bound tRNAs. This is Large ribosomal subunit protein uL5 from Blochmanniella floridana.